The following is a 350-amino-acid chain: Twinfilin-1 (350 aa).

N-acetylserine is present on S2. The ADF-H 1 domain occupies 2–139 (SHQTGIQASE…SLHGYKKYLL (138 aa)). S143 and S277 each carry phosphoserine. One can recognise an ADF-H 2 domain in the interval 175-313 (LQGVAFPISR…TADFLYDEVH (139 aa)). Y309 is modified (phosphotyrosine). The disordered stretch occupies residues 317–350 (HAHKQSFAKPKGPAGKRGIRRLIRGPAEAEATTD). Position 349 is a phosphothreonine (T349).

Belongs to the actin-binding proteins ADF family. Twinfilin subfamily. In terms of assembly, interacts with G-actin; ADP-actin form and capping protein (CP). May also be able to interact with TWF2 and phosphoinositides, PI(4,5)P2. When bound to PI(4,5)P2, it is down-regulated. Interacts with ACTG1. In terms of processing, phosphorylated on serine and threonine residues. Widely expressed with highest levels in brain, liver and kidney. Also expressed in heart, lung and testis. Not detected in spleen or skeletal muscle.

It is found in the cytoplasm. The protein resides in the cytoskeleton. In terms of biological role, actin-binding protein involved in motile and morphological processes. Inhibits actin polymerization, likely by sequestering G-actin. By capping the barbed ends of filaments, it also regulates motility. Seems to play an important role in clathrin-mediated endocytosis and distribution of endocytic organelles. The protein is Twinfilin-1 (Twf1) of Mus musculus (Mouse).